The sequence spans 196 residues: Phosphoheptose isomerase (196 aa).

Positions 36-196 (MVACLMNEGK…AVDYMLLGGD (161 aa)) constitute an SIS domain. 51 to 53 (NGG) is a substrate binding site. 2 residues coordinate Zn(2+): His60 and Glu64. Substrate contacts are provided by residues Glu64, 93-94 (ND), 119-121 (STS), Ser124, and Gln174. Residues Gln174 and His182 each coordinate Zn(2+).

It belongs to the SIS family. GmhA subfamily. Homotetramer. Requires Zn(2+) as cofactor.

Its subcellular location is the cytoplasm. It catalyses the reaction 2 D-sedoheptulose 7-phosphate = D-glycero-alpha-D-manno-heptose 7-phosphate + D-glycero-beta-D-manno-heptose 7-phosphate. The protein operates within carbohydrate biosynthesis; D-glycero-D-manno-heptose 7-phosphate biosynthesis; D-glycero-alpha-D-manno-heptose 7-phosphate and D-glycero-beta-D-manno-heptose 7-phosphate from sedoheptulose 7-phosphate: step 1/1. In terms of biological role, catalyzes the isomerization of sedoheptulose 7-phosphate in D-glycero-D-manno-heptose 7-phosphate. This chain is Phosphoheptose isomerase, found in Laribacter hongkongensis (strain HLHK9).